Consider the following 204-residue polypeptide: Recombination protein RecR (204 aa).

A C4-type zinc finger spans residues 58–75; that stretch reads CSICQNVTDRDADPCRIC. Residues 83–181 form the Toprim domain; that stretch reads SVICVVESPV…MVTKIARGIP (99 aa).

The protein belongs to the RecR family.

Functionally, may play a role in DNA repair. It seems to be involved in an RecBC-independent recombinational process of DNA repair. It may act with RecF and RecO. The polypeptide is Recombination protein RecR (Chlorobium phaeovibrioides (strain DSM 265 / 1930) (Prosthecochloris vibrioformis (strain DSM 265))).